Reading from the N-terminus, the 519-residue chain is Cytochrome P450 52A10 (519 aa).

Residue Cys-466 coordinates heme.

This sequence belongs to the cytochrome P450 family. It depends on heme as a cofactor.

Its subcellular location is the membrane. Functionally, together with an NADPH cytochrome P450 the enzyme system catalyzes the terminal hydroxylation as the first step in the assimilation of alkanes and fatty acids. The sequence is that of Cytochrome P450 52A10 (CYP52A10) from Candida maltosa (Yeast).